We begin with the raw amino-acid sequence, 54 residues long: Large ribosomal subunit protein bL33 (54 aa).

Belongs to the bacterial ribosomal protein bL33 family.

This Stenotrophomonas maltophilia (strain K279a) protein is Large ribosomal subunit protein bL33.